A 95-amino-acid chain; its full sequence is MENVRAHLYIKGKVQGVFFRQSMKEIAVRYGVRGWVRNRSDGRTVEAVLEGPRDAVAKVIEWAKVGPPGARVEEVEVDWEEYKGEFQDFRILPTV.

The Acylphosphatase-like domain maps to 5-93 (RAHLYIKGKV…GEFQDFRILP (89 aa)). Catalysis depends on residues R20 and N38.

The protein belongs to the acylphosphatase family.

The catalysed reaction is an acyl phosphate + H2O = a carboxylate + phosphate + H(+). In Pyrobaculum islandicum (strain DSM 4184 / JCM 9189 / GEO3), this protein is Acylphosphatase (acyP).